Consider the following 185-residue polypeptide: Large ribosomal subunit protein bL25 (185 aa).

This sequence belongs to the bacterial ribosomal protein bL25 family. CTC subfamily. As to quaternary structure, part of the 50S ribosomal subunit; part of the 5S rRNA/L5/L18/L25 subcomplex. Contacts the 5S rRNA. Binds to the 5S rRNA independently of L5 and L18.

This is one of the proteins that binds to the 5S RNA in the ribosome where it forms part of the central protuberance. This chain is Large ribosomal subunit protein bL25, found in Chlamydia caviae (strain ATCC VR-813 / DSM 19441 / 03DC25 / GPIC) (Chlamydophila caviae).